The chain runs to 222 residues: Probable mitochondrial import inner membrane translocase subunit Tim17 3 (222 aa).

3 helical membrane passes run 16–36, 60–80, and 115–135; these read CGCAFMMGTIGGSLFEFLKGF, SIAGSFAVWGATFSTVDCALV, and ALVGCLVLAMIEGAGAAVATI.

Belongs to the Tim17/Tim22/Tim23 family. In terms of assembly, component of the TIM23 complex at least composed of Tim23, Tim17 (Tim17a1, Tim17a2 or Tim17b1) and a Tim50. The complex interacts with the Tim44 component of the PAM complex.

It localises to the mitochondrion inner membrane. Essential component of the TIM23 complex, a complex that mediates the translocation of transit peptide-containing proteins across the mitochondrial inner membrane. In Drosophila melanogaster (Fruit fly), this protein is Probable mitochondrial import inner membrane translocase subunit Tim17 3 (Tim17a1).